A 349-amino-acid polypeptide reads, in one-letter code: Holliday junction branch migration complex subunit RuvB (349 aa).

Positions 1–186 are large ATPase domain (RuvB-L); sequence MSEDYLDRDV…FGFTAHMDFY (186 aa). ATP contacts are provided by residues L25, R26, G67, K70, T71, S72, 133–135, R176, Y186, and R223; that span reads EDF. T71 contacts Mg(2+). Residues 187 to 257 form a small ATPAse domain (RuvB-S) region; the sequence is EPTELEGVLA…VAKAALAVYD (71 aa). The interval 260–349 is head domain (RuvB-H); it reads ELGLDRLDRA…GLSQPGLFES (90 aa). Residues R315 and R320 each coordinate DNA.

This sequence belongs to the RuvB family. Homohexamer. Forms an RuvA(8)-RuvB(12)-Holliday junction (HJ) complex. HJ DNA is sandwiched between 2 RuvA tetramers; dsDNA enters through RuvA and exits via RuvB. An RuvB hexamer assembles on each DNA strand where it exits the tetramer. Each RuvB hexamer is contacted by two RuvA subunits (via domain III) on 2 adjacent RuvB subunits; this complex drives branch migration. In the full resolvosome a probable DNA-RuvA(4)-RuvB(12)-RuvC(2) complex forms which resolves the HJ.

The protein localises to the cytoplasm. It catalyses the reaction ATP + H2O = ADP + phosphate + H(+). The RuvA-RuvB-RuvC complex processes Holliday junction (HJ) DNA during genetic recombination and DNA repair, while the RuvA-RuvB complex plays an important role in the rescue of blocked DNA replication forks via replication fork reversal (RFR). RuvA specifically binds to HJ cruciform DNA, conferring on it an open structure. The RuvB hexamer acts as an ATP-dependent pump, pulling dsDNA into and through the RuvAB complex. RuvB forms 2 homohexamers on either side of HJ DNA bound by 1 or 2 RuvA tetramers; 4 subunits per hexamer contact DNA at a time. Coordinated motions by a converter formed by DNA-disengaged RuvB subunits stimulates ATP hydrolysis and nucleotide exchange. Immobilization of the converter enables RuvB to convert the ATP-contained energy into a lever motion, pulling 2 nucleotides of DNA out of the RuvA tetramer per ATP hydrolyzed, thus driving DNA branch migration. The RuvB motors rotate together with the DNA substrate, which together with the progressing nucleotide cycle form the mechanistic basis for DNA recombination by continuous HJ branch migration. Branch migration allows RuvC to scan DNA until it finds its consensus sequence, where it cleaves and resolves cruciform DNA. The sequence is that of Holliday junction branch migration complex subunit RuvB from Mycobacterium leprae (strain Br4923).